We begin with the raw amino-acid sequence, 530 residues long: RNA-binding protein 39 (530 aa).

The interval Met1–Thr146 is disordered. Position 2 is an N-acetylalanine (Ala2). Basic and acidic residues predominate over residues Pro14–Ser32. Basic residues-rich tracts occupy residues Lys33–Lys56 and Lys64–Tyr95. Tyr95 is subject to Phosphotyrosine. Ser97 and Ser100 each carry phosphoserine. A Glycyl lysine isopeptide (Lys-Gly) (interchain with G-Cter in SUMO2) cross-link involves residue Lys111. Ser117 is modified (phosphoserine). Residue Lys119 forms a Glycyl lysine isopeptide (Lys-Gly) (interchain with G-Cter in SUMO2) linkage. Basic residues predominate over residues Lys119–Pro130. Phosphoserine is present on residues Ser121 and Ser136. Over residues Phe131 to Thr146 the composition is skewed to basic and acidic residues. At Thr146 the chain carries Phosphothreonine. Residues Arg153–Ala230 enclose the RRM 1 domain. Residue Lys244 forms a Glycyl lysine isopeptide (Lys-Gly) (interchain with G-Cter in SUMO2) linkage. One can recognise an RRM 2 domain in the interval Met250–Glu328. An activating domain region spans residues Lys291–Gly355. The tract at residues Lys291–Gln406 is interaction with JUN. Residues Ser334, Ser337, and Ser341 each carry the phosphoserine modification. The tract at residues Gly355–Gln406 is interaction with ESR1 and ESR2. Residues Gln406–Arg530 form an interaction with NCOA6 region. Residues Glu445–Leu508 form the RRM 3 domain.

The protein belongs to the splicing factor SR family. In terms of assembly, interacts with NCOA6 and JUN. Interacts with ESR1 and ESR2, in the presence of estradiol (E2). Interacts with RSRC1 (via Arg/Ser-rich domain). Interacts with SF3B1. Interacts with ZNF106 (via N-terminus). In terms of processing, aryl sulfonamide anticancer drugs, such as indisulam (E7070) or E7820, promote ubiquitination and subsequent degradation by the DCX(DCAF15) complex. RBM39 degradation results in splicing defects and death in cancer cell lines. Aryl sulfonamide anticancer drugs change the substrate specificity of DCAF15 by acting as a molecular glue that promotes binding between DCAF15 and weak affinity interactor RBM39. Widely expressed. Highly expressed in pancreas, skeletal muscle, lung and brain. Expressed at intermediate level in kidney, liver and heart.

The protein localises to the nucleus speckle. Its function is as follows. RNA-binding protein that acts as a pre-mRNA splicing factor. Acts by promoting exon inclusion via regulation of exon cassette splicing. Also acts as a transcriptional coactivator for steroid nuclear receptors ESR1/ER-alpha and ESR2/ER-beta, and JUN/AP-1, independently of the pre-mRNA splicing factor activity. The sequence is that of RNA-binding protein 39 from Homo sapiens (Human).